Consider the following 131-residue polypeptide: Small ribosomal subunit protein uS11 (131 aa).

It belongs to the universal ribosomal protein uS11 family. In terms of assembly, part of the 30S ribosomal subunit. Interacts with proteins S7 and S18. Binds to IF-3.

Its function is as follows. Located on the platform of the 30S subunit, it bridges several disparate RNA helices of the 16S rRNA. Forms part of the Shine-Dalgarno cleft in the 70S ribosome. The chain is Small ribosomal subunit protein uS11 from Endomicrobium trichonymphae.